Reading from the N-terminus, the 750-residue chain is MIIRSPEPEVKILVDRDPVKTSFEAWAKPGHFSRTIAKGPETTTWIWNLHADAHDFDSHTSDLEEISRKIFSAHFGQLSIIFLWLSGMYFHGARFSNYEAWLSDPTHIGPSAQVVWPIVGQEILNGDVGGGFRGIQITSGFFQIWRASGITSELQLYCTAIGALVFAALMLFAGWFHYHKAAPKLAWFQDVESMLNHHLAGLLGLGSLSWAGHQIHVSLPINQFLNAGVDPKEIPLPHELILNRDLLAQLYPSFAEGATPFFTLNWSKYADFLTFRGGLDPVTGGLWLTDTAHHHLAIAILFLIAGHMYRTNWGIGHGLKDILEAHKGPFTGQGHKGLYEILTTSWHAQLALNLAMLGSLTIVVAHHMYAMPPYPYLATDYGTQLSLFTHHMWIGGFLIVGAAAHAAIFMVRDYDPTTRYNDLLDRVLRHRDAIISHLNWACIFLGFHSFGLYIHNDTMSALGRPQDMFSDTAIQLQPVFAQWIQNTHALAPSATAPGATASTSLTWGGSDLVAVGGKVALLPIPLGTADFLVHHIHAFTIHVTVLILLKGVLFARSSRLIPDKANLGFRFPCDGPGRGGTCQVSAWDHVFLGLFWMYNSISVVIFHFSWKMQSDVWGSISDQGVVTHITGGNFAQSSITINGWLRDFLWAQASQVIQSYGSSLSAYGLFFLGAHFVWAFSLMFLFSGRGYWQELIESIVWAHNKLKVAPATQPRALSIVQGRAVGVTHYLLGGIATTWAFFLARIIAVG.

8 helical membrane-spanning segments follow: residues 70–93 (IFSA…FHGA), 156–179 (LYCT…FHYH), 195–219 (LNHH…HVSL), 291–309 (TAHH…GHMY), 346–369 (WHAQ…HHMY), 385–411 (LSLF…IFMV), 433–455 (AIIS…LYIH), and 531–549 (FLVH…LILL). Residues cysteine 573 and cysteine 582 each coordinate [4Fe-4S] cluster. 2 helical membrane passes run 589–610 (HVFL…HFSW) and 664–686 (LSAY…MFLF). Residue histidine 675 participates in chlorophyll a' binding. Chlorophyll a is bound by residues methionine 683 and tyrosine 691. Tryptophan 692 serves as a coordination point for phylloquinone. A helical transmembrane segment spans residues 724–744 (AVGVTHYLLGGIATTWAFFLA).

This sequence belongs to the PsaA/PsaB family. The PsaA/B heterodimer binds the P700 chlorophyll special pair and subsequent electron acceptors. PSI consists of a core antenna complex that captures photons, and an electron transfer chain that converts photonic excitation into a charge separation. The eukaryotic PSI reaction center is composed of at least 11 subunits. P700 is a chlorophyll a/chlorophyll a' dimer, A0 is one or more chlorophyll a, A1 is one or both phylloquinones and FX is a shared 4Fe-4S iron-sulfur center. is required as a cofactor.

The protein localises to the plastid. It is found in the chloroplast thylakoid membrane. It carries out the reaction reduced [plastocyanin] + hnu + oxidized [2Fe-2S]-[ferredoxin] = oxidized [plastocyanin] + reduced [2Fe-2S]-[ferredoxin]. Its function is as follows. PsaA and PsaB bind P700, the primary electron donor of photosystem I (PSI), as well as the electron acceptors A0, A1 and FX. PSI is a plastocyanin-ferredoxin oxidoreductase, converting photonic excitation into a charge separation, which transfers an electron from the donor P700 chlorophyll pair to the spectroscopically characterized acceptors A0, A1, FX, FA and FB in turn. Oxidized P700 is reduced on the lumenal side of the thylakoid membrane by plastocyanin. This Spinacia oleracea (Spinach) protein is Photosystem I P700 chlorophyll a apoprotein A1.